Reading from the N-terminus, the 242-residue chain is Probable transcriptional regulatory protein Bxeno_A1185 (242 aa).

This sequence belongs to the TACO1 family.

It localises to the cytoplasm. This is Probable transcriptional regulatory protein Bxeno_A1185 from Paraburkholderia xenovorans (strain LB400).